The chain runs to 131 residues: Single-stranded DNA-binding protein 1 (131 aa).

The region spanning M1 to E103 is the SSB domain.

As to quaternary structure, homotetramer.

The sequence is that of Single-stranded DNA-binding protein 1 (ssb1) from Streptococcus pyogenes serotype M6 (strain ATCC BAA-946 / MGAS10394).